We begin with the raw amino-acid sequence, 319 residues long: Acetyl-coenzyme A carboxylase carboxyl transferase subunit alpha (319 aa).

Residues 32 to 293 (NVDTEVRALE…KAVLLNELEA (262 aa)) form the CoA carboxyltransferase C-terminal domain.

It belongs to the AccA family. In terms of assembly, acetyl-CoA carboxylase is a heterohexamer composed of biotin carboxyl carrier protein (AccB), biotin carboxylase (AccC) and two subunits each of ACCase subunit alpha (AccA) and ACCase subunit beta (AccD).

The protein localises to the cytoplasm. It carries out the reaction N(6)-carboxybiotinyl-L-lysyl-[protein] + acetyl-CoA = N(6)-biotinyl-L-lysyl-[protein] + malonyl-CoA. Its pathway is lipid metabolism; malonyl-CoA biosynthesis; malonyl-CoA from acetyl-CoA: step 1/1. Its function is as follows. Component of the acetyl coenzyme A carboxylase (ACC) complex. First, biotin carboxylase catalyzes the carboxylation of biotin on its carrier protein (BCCP) and then the CO(2) group is transferred by the carboxyltransferase to acetyl-CoA to form malonyl-CoA. This Xylella fastidiosa (strain M12) protein is Acetyl-coenzyme A carboxylase carboxyl transferase subunit alpha.